Consider the following 181-residue polypeptide: Large ribosomal subunit protein uL5 (181 aa).

This sequence belongs to the universal ribosomal protein uL5 family. Part of the 50S ribosomal subunit; part of the 5S rRNA/L5/L18/L25 subcomplex. Contacts the 5S rRNA and the P site tRNA. Forms a bridge to the 30S subunit in the 70S ribosome.

Its function is as follows. This is one of the proteins that bind and probably mediate the attachment of the 5S RNA into the large ribosomal subunit, where it forms part of the central protuberance. In the 70S ribosome it contacts protein S13 of the 30S subunit (bridge B1b), connecting the 2 subunits; this bridge is implicated in subunit movement. Contacts the P site tRNA; the 5S rRNA and some of its associated proteins might help stabilize positioning of ribosome-bound tRNAs. This Sulfurimonas denitrificans (strain ATCC 33889 / DSM 1251) (Thiomicrospira denitrificans (strain ATCC 33889 / DSM 1251)) protein is Large ribosomal subunit protein uL5.